A 121-amino-acid polypeptide reads, in one-letter code: Large ribosomal subunit protein bL12 (121 aa).

Belongs to the bacterial ribosomal protein bL12 family. In terms of assembly, homodimer. Part of the ribosomal stalk of the 50S ribosomal subunit. Forms a multimeric L10(L12)X complex, where L10 forms an elongated spine to which 2 to 4 L12 dimers bind in a sequential fashion. Binds GTP-bound translation factors.

Functionally, forms part of the ribosomal stalk which helps the ribosome interact with GTP-bound translation factors. Is thus essential for accurate translation. The protein is Large ribosomal subunit protein bL12 of Vibrio atlanticus (strain LGP32) (Vibrio splendidus (strain Mel32)).